A 362-amino-acid chain; its full sequence is Porin Omp2b (362 aa).

An N-terminal signal peptide occupies residues 1–22 (MNIKSLLLGSAAALVAASGAQA).

The protein belongs to the alphaproteobacteria porin family. Homotrimer.

It is found in the cell outer membrane. Its function is as follows. Forms passive diffusion pores that allow small molecular weight hydrophilic materials across the outer membrane. This chain is Porin Omp2b (omp2b), found in Brucella canis (strain ATCC 23365 / NCTC 10854 / RM-666).